We begin with the raw amino-acid sequence, 177 residues long: Inorganic pyrophosphatase (177 aa).

Positions 31, 45, and 57 each coordinate substrate. Mg(2+)-binding residues include aspartate 67, aspartate 72, and aspartate 104. Tyrosine 141 provides a ligand contact to substrate.

It belongs to the PPase family. Homohexamer. Also forms homotrimers, but the trimeric form is 23% less active than the hexamer. In fact, likely forms a dimer of trimers. The cofactor is Mg(2+).

It localises to the cytoplasm. It carries out the reaction diphosphate + H2O = 2 phosphate + H(+). With respect to regulation, inhibited by sodium fluoride (NaF) in vitro, similarly to other class A type inorganic pyrophosphatases. Catalyzes the hydrolysis of inorganic pyrophosphate (PPi) forming two phosphate ions. The hydrolysis of PPi by inorganic pyrophosphatase releases a considerable amount of energy that can drive unfavorable biochemical transformations to completion. Is not active on nucleoside triphosphates (ATP, TTP, GTP, or CTP) or nucleoside diphosphate (ADP). The polypeptide is Inorganic pyrophosphatase (Haloferax volcanii (strain ATCC 29605 / DSM 3757 / JCM 8879 / NBRC 14742 / NCIMB 2012 / VKM B-1768 / DS2) (Halobacterium volcanii)).